The chain runs to 225 residues: Rho GDP-dissociation inhibitor 3 (225 aa).

Belongs to the Rho GDI family. Detected only in brain, lung, kidney and testis.

The protein resides in the cytoplasm. Inhibits GDP/GTP exchange reaction of RhoB. Interacts specifically with the GDP- and GTP-bound forms of post-translationally processed Rhob and Rhog proteins, both of which show a growth-regulated expression in mammalian cells. Stimulates the release of the GDP-bound but not the GTP-bound RhoB protein. Also inhibits the GDP/GTP exchange of RhoB but shows less ability to inhibit the dissociation of prebound GTP. This is Rho GDP-dissociation inhibitor 3 (Arhgdig) from Mus musculus (Mouse).